The following is a 483-amino-acid chain: MAQADIALIGLAVMGQNLILNMNDHGFVVCAFNRTVSKVDDFLANEAKGTKVVGAQSLKEMVSKLKKPRRIILLVKAGQAVDDFIEKLVPLLDTGDIIIDGGNSEYRDTTRRCRDLKAKGILFVGSGVSGGEEGARYGPSLMPGGNKEAWPHIKTIFQGIAAKVGTGEPCCDWVGDEGAGHFVKMVHNGIEYGDMQLICEAYHLMKDVLGMAQDEMAQAFEDWNKTELDSFLIEITANILKFQDTDGKHLLPKIRDSAGQKGTGKWTAISALEYGVPVTLIGEAVFARCLSSLKDERIQASKKLKGPQKFQFDGDKKSFLEDIRKALYASKIISYAQGFMLLRQAATEFGWTLNYGGIALMWRGGCIIRSVFLGKIKDAFDRNPELQNLLLDDFFKSAVENCQDSWRRAVSTGVQAGIPMPCFTTALSFYDGYRHEMLPASLIQAQRDYFGAHTYELLAKPGQFIHTNWTGHGGTVSSSSYNA.

NADP(+) contacts are provided by residues 10–15 (GLAVMG) and 33–35 (NRT). K38 bears the N6-acetyllysine mark. S57 bears the Phosphoserine mark. Residue K59 is modified to N6-acetyllysine. NADP(+) contacts are provided by residues 75-77 (VKA) and N103. Residues N103 and 129 to 131 (SGG) each bind substrate. Position 129 is a phosphoserine (S129). The active-site Proton acceptor is the K184. 187–188 (HN) provides a ligand contact to substrate. E191 (proton donor) is an active-site residue. 3 residues coordinate substrate: Y192, K261, and R288. An N6-acetyllysine modification is found at K309. Substrate contacts are provided by R447 and H453. 478–481 (SSSY) is an NADP(+) binding site.

It belongs to the 6-phosphogluconate dehydrogenase family. In terms of assembly, homodimer.

It is found in the cytoplasm. The enzyme catalyses 6-phospho-D-gluconate + NADP(+) = D-ribulose 5-phosphate + CO2 + NADPH. It functions in the pathway carbohydrate degradation; pentose phosphate pathway; D-ribulose 5-phosphate from D-glucose 6-phosphate (oxidative stage): step 3/3. In terms of biological role, catalyzes the oxidative decarboxylation of 6-phosphogluconate to ribulose 5-phosphate and CO(2), with concomitant reduction of NADP to NADPH. The polypeptide is 6-phosphogluconate dehydrogenase, decarboxylating (PGD) (Homo sapiens (Human)).